A 355-amino-acid chain; its full sequence is Homeobox protein knotted-1-like 12 (355 aa).

Disordered regions lie at residues 52–82 (AAGPSQYHGHGHPHHGGGHHHSKHGGAGGGE) and 207–233 (ECVGSSEDDMDPSGRENEPPEIDPRAE). Residues 60–75 (GHGHPHHGGGHHHSKH) are compositionally biased toward basic residues. Positions 218-233 (PSGRENEPPEIDPRAE) are enriched in basic and acidic residues. The 21-residue stretch at 236–256 (ELKFQLLKKYSGYLSSLRQEF) folds into the ELK domain. The homeobox; TALE-type DNA-binding region spans 257-320 (SKKKKKGKLP…NQRKRHWKPS (64 aa)).

The protein belongs to the TALE/KNOX homeobox family. In terms of tissue distribution, expressed in stems, rachis and inflorescence.

The protein localises to the nucleus. Functionally, probable transcription factor that may be involved in shoot formation during embryogenesis. This Oryza sativa subsp. japonica (Rice) protein is Homeobox protein knotted-1-like 12 (OSH15).